A 117-amino-acid chain; its full sequence is UPF0295 protein GTNG_0491 (117 aa).

A run of 2 helical transmembrane segments spans residues 12–32 (IRTF…LGLF) and 42–62 (LFMV…FWIG).

Belongs to the UPF0295 family.

The protein resides in the cell membrane. The sequence is that of UPF0295 protein GTNG_0491 from Geobacillus thermodenitrificans (strain NG80-2).